The following is a 98-amino-acid chain: Large ribosomal subunit protein uL23 (98 aa).

This sequence belongs to the universal ribosomal protein uL23 family. As to quaternary structure, part of the 50S ribosomal subunit. Contacts protein L29, and trigger factor when it is bound to the ribosome.

In terms of biological role, one of the early assembly proteins it binds 23S rRNA. One of the proteins that surrounds the polypeptide exit tunnel on the outside of the ribosome. Forms the main docking site for trigger factor binding to the ribosome. This is Large ribosomal subunit protein uL23 from Bifidobacterium longum (strain DJO10A).